Consider the following 225-residue polypeptide: 2-C-methyl-D-erythritol 4-phosphate cytidylyltransferase (225 aa).

The protein belongs to the IspD/TarI cytidylyltransferase family. IspD subfamily.

The catalysed reaction is 2-C-methyl-D-erythritol 4-phosphate + CTP + H(+) = 4-CDP-2-C-methyl-D-erythritol + diphosphate. The protein operates within isoprenoid biosynthesis; isopentenyl diphosphate biosynthesis via DXP pathway; isopentenyl diphosphate from 1-deoxy-D-xylulose 5-phosphate: step 2/6. Its function is as follows. Catalyzes the formation of 4-diphosphocytidyl-2-C-methyl-D-erythritol from CTP and 2-C-methyl-D-erythritol 4-phosphate (MEP). The protein is 2-C-methyl-D-erythritol 4-phosphate cytidylyltransferase of Cereibacter sphaeroides (strain KD131 / KCTC 12085) (Rhodobacter sphaeroides).